Consider the following 397-residue polypeptide: tRNA (guanine-N(7)-)-methyltransferase non-catalytic subunit wuho (397 aa).

4 WD repeats span residues 75–115 (KVEV…AQLL), 163–202 (GHLSIVYDVLWSEDQQYIITCDRDDKIRVTNYPATFDIHS), 206–244 (GHKEFVSGLAMLTEQHIISASGDKTLRVWNYTCGKELLL), and 303–343 (AGTW…RASG).

It belongs to the WD repeat TRM82 family. Forms a heterodimer with the catalytic subunit Mettl1. Interacts with mei-P26 and weakly interacts with bgcn; required for the function or formation of the mei-P26-bgcn-bam-sxl complex. Interacts with nanos; may be involved in mei-P26-dependent derepression of the BMP signaling pathway. Interacts with Myc; the interaction may be mediated by mei-P26 and may be involved in the regulation of ribosome biogenesis. In terms of tissue distribution, in testis, it is present at high level in hub cells, a niche for germline stem cells of testis. Ubiquitously expressed in all testicular cells throughout spermatogenesis. Ubiquitously expressed in all germline and somatic cells of the ovary.

Its subcellular location is the nucleus. It localises to the cytoplasm. It functions in the pathway tRNA modification; N(7)-methylguanine-tRNA biosynthesis. In terms of biological role, required for the Mettl1-dependent formation of N(7)-methylguanine at position 46 (m7G46) in tRNA. In the Mettl1-wuho methyltransferase complex, it is required to stabilize and induce conformational changes of the catalytic subunit. Required for binding of nanos mRNA and repression of translation by the mei-P26-bgcn-bam-sxl complex. May cooperate with mei-P26 and nanos to derepress the BMP signaling pathway. May cooperate with mei-P26 to suppress expression of a subset of microRNAs. May cooperate with mei-P26 to regulate bam expression levels in germline cells during gametogenesis. Required to promote mitosis to meiosis transition during gametogenesis. May regulate germline cell division in part by regulating ribosome biogenesis. The sequence is that of tRNA (guanine-N(7)-)-methyltransferase non-catalytic subunit wuho from Drosophila persimilis (Fruit fly).